The following is a 334-amino-acid chain: Hemin transport system permease protein HmuU (334 aa).

9 helical membrane-spanning segments follow: residues 9-29 (LMLGFLLILLVILALGSANMG), 60-80 (LLAVVVGCALAVSGTIMQGLF), 96-116 (AALCVGLIIVMPFSLPPLLAL), 117-137 (YSHMVGAFIGSLAISTIIFTL), 149-169 (LLAGIAINALCGAAVGVLTYI), 191-211 (WSTLLVASSLILPTCILGLLQ), 244-264 (AILIGAAVAVSGVIGFIGLVV), 278-298 (WLLPGAALGGACLLLTADTLA), and 306-326 (EMPVGLLTSLLGGPYFLWLIL).

The protein belongs to the binding-protein-dependent transport system permease family. FecCD subfamily.

The protein localises to the cell inner membrane. Its function is as follows. Part of the binding-protein-dependent transport system for hemin; probably responsible for the translocation of the substrate across the membrane. In Yersinia pestis, this protein is Hemin transport system permease protein HmuU (hmuU).